A 144-amino-acid polypeptide reads, in one-letter code: Nucleoside diphosphate kinase (144 aa).

ATP-binding residues include Lys11, Phe59, Arg87, Thr93, Arg104, and Asn114. The active-site Pros-phosphohistidine intermediate is the His117.

This sequence belongs to the NDK family. As to quaternary structure, homotetramer. It depends on Mg(2+) as a cofactor.

It is found in the cytoplasm. It catalyses the reaction a 2'-deoxyribonucleoside 5'-diphosphate + ATP = a 2'-deoxyribonucleoside 5'-triphosphate + ADP. The catalysed reaction is a ribonucleoside 5'-diphosphate + ATP = a ribonucleoside 5'-triphosphate + ADP. In terms of biological role, major role in the synthesis of nucleoside triphosphates other than ATP. The ATP gamma phosphate is transferred to the NDP beta phosphate via a ping-pong mechanism, using a phosphorylated active-site intermediate. In Baumannia cicadellinicola subsp. Homalodisca coagulata, this protein is Nucleoside diphosphate kinase.